A 531-amino-acid polypeptide reads, in one-letter code: CTP synthase (531 aa).

Residues 1–265 (MAKYIFITGG…DRIITERLNL (265 aa)) form an amidoligase domain region. Residue Ser-13 coordinates CTP. Ser-13 is a binding site for UTP. 14–19 (SLGKGI) is a binding site for ATP. Tyr-54 is a binding site for L-glutamine. Residue Asp-71 participates in ATP binding. The Mg(2+) site is built by Asp-71 and Glu-139. CTP contacts are provided by residues 146–148 (DIE), 186–191 (KTKPTQ), and Lys-222. UTP contacts are provided by residues 186-191 (KTKPTQ) and Lys-222. One can recognise a Glutamine amidotransferase type-1 domain in the interval 290–529 (NVALVGKYVE…IRACLEYKRK (240 aa)). Gly-349 contacts L-glutamine. Cys-376 serves as the catalytic Nucleophile; for glutamine hydrolysis. Residues 377–380 (LGMQ), Glu-400, and Arg-457 contribute to the L-glutamine site. Catalysis depends on residues His-502 and Glu-504.

It belongs to the CTP synthase family. In terms of assembly, homotetramer.

The enzyme catalyses UTP + L-glutamine + ATP + H2O = CTP + L-glutamate + ADP + phosphate + 2 H(+). The catalysed reaction is L-glutamine + H2O = L-glutamate + NH4(+). It catalyses the reaction UTP + NH4(+) + ATP = CTP + ADP + phosphate + 2 H(+). It functions in the pathway pyrimidine metabolism; CTP biosynthesis via de novo pathway; CTP from UDP: step 2/2. Its activity is regulated as follows. Allosterically activated by GTP, when glutamine is the substrate; GTP has no effect on the reaction when ammonia is the substrate. The allosteric effector GTP functions by stabilizing the protein conformation that binds the tetrahedral intermediate(s) formed during glutamine hydrolysis. Inhibited by the product CTP, via allosteric rather than competitive inhibition. Catalyzes the ATP-dependent amination of UTP to CTP with either L-glutamine or ammonia as the source of nitrogen. Regulates intracellular CTP levels through interactions with the four ribonucleotide triphosphates. The polypeptide is CTP synthase (Aquifex aeolicus (strain VF5)).